The primary structure comprises 184 residues: Small ribosomal subunit protein eS8 (184 aa).

The tract at residues 1 to 23 (MGISRDSRHKRRLTGGRYPVHKK) is disordered. Residues 7–23 (SRHKRRLTGGRYPVHKK) show a composition bias toward basic residues.

Belongs to the eukaryotic ribosomal protein eS8 family.

The protein is Small ribosomal subunit protein eS8 (RPS8) of Theileria annulata.